The following is a 377-amino-acid chain: Aquaporin-2 (377 aa).

The Cytoplasmic portion of the chain corresponds to 1 to 14 (MAANKGINGGIKNH). The chain crosses the membrane as a helical span at residues 15-35 (FIAFLGEFVGTFLFLFFAYGG). Residues 36–56 (TQTANQTSQKNPSIVASPDIN) are Extracellular-facing. Asparagine 40 carries an N-linked (GlcNAc...) asparagine glycan. The chain crosses the membrane as a helical span at residues 57-77 (QLLYIALIFGFSLTVNVWIFF). The Cytoplasmic segment spans residues 78–87 (RVSGGLFNPA). Positions 85–87 (NPA) match the NPA 1 motif. Residues 88 to 108 (VTIALCLVGVVGPVRSIFIFI) form a helical membrane-spanning segment. At 109-144 (AQVVASIAAAAAVRGLLPGDTVLFSCALAPGTSIAQ) the chain is on the extracellular side. The helical transmembrane segment at 145–165 (GLFLEMFFTIELVFTILMLAA) threads the bilayer. The Cytoplasmic portion of the chain corresponds to 166–171 (EKTKVT). Residues 172-192 (FVAPVGIGLSLFVAELMGVAW) form a helical membrane-spanning segment. The Extracellular portion of the chain corresponds to 193 to 215 (TGGALNPARAFGAEVIGGFRGYH). The short motif at 198–200 (NPA) is the NPA 2 element. A helical transmembrane segment spans residues 216 to 236 (WIYWLGPLMGAVLAAGFYKVI). Residues 237-377 (KFLNYEQVNG…ANAQNRAKTP (141 aa)) are Cytoplasmic-facing. 2 disordered regions span residues 278–332 (LFQT…RENE) and 358–377 (RLSG…AKTP). 2 stretches are compositionally biased toward polar residues: residues 315-328 (PAQQ…ASTI) and 368-377 (ANAQNRAKTP).

This sequence belongs to the MIP/aquaporin (TC 1.A.8) family.

It is found in the membrane. It carries out the reaction H2O(in) = H2O(out). It catalyses the reaction glycerol(in) = glycerol(out). Water channel required to facilitate the transport of water across membranes. Involved in conidiation. This Botryotinia fuckeliana (strain B05.10) (Noble rot fungus) protein is Aquaporin-2.